The following is a 182-amino-acid chain: Mesencephalic astrocyte-derived neurotrophic factor (182 aa).

A signal peptide spans 1-24; the sequence is MRRMWATQGLAVALALSVLPGSRA. 4 disulfide bridges follow: cysteine 30–cysteine 117, cysteine 33–cysteine 106, cysteine 64–cysteine 75, and cysteine 151–cysteine 154. The residue at position 76 (tyrosine 76) is a Phosphotyrosine. The segment at 96 to 158 is interacts with ERN1, EIF2AK3 and ATF6; that stretch reads LAHHIPVEKI…ETCKGCAEKS (63 aa). The segment at 129–172 is interacts with HSPA5; sequence TVDLKKLRVKELKKILDDWGETCKGCAEKSDYIRKINELMPKYA.

This sequence belongs to the ARMET family. In terms of assembly, interacts directly (via SAP domain) with HSPA5/BiP; the interaction inhibits ATP binding to HSPA5/BiP and subsequent nucleotide exchange. Component of a complex containing at least CRELD2, MANF, MATN3 and PDIA4. Interacts (via C-terminus) with ERN1 (via luminal domain); the interaction is decreased in the presence of increasing concentrations of Ca(2+). In terms of processing, may contain sialic acid residues.

The protein resides in the secreted. The protein localises to the endoplasmic reticulum lumen. It is found in the sarcoplasmic reticulum lumen. Its function is as follows. Selectively promotes the survival of dopaminergic neurons of the ventral mid-brain. Modulates GABAergic transmission to the dopaminergic neurons of the substantia nigra. Enhances spontaneous, as well as evoked, GABAergic inhibitory postsynaptic currents in dopaminergic neurons. Inhibits cell proliferation and endoplasmic reticulum (ER) stress-induced cell death. Retained in the ER/sarcoplasmic reticulum (SR) through association with the endoplasmic reticulum chaperone protein HSPA5 under normal conditions. Stabilizes HSPA5/BiP in its substrate-bound ADP state, which facilitates HSPA5/BiP incorporation into chaperone-client complexes during endoplasmic reticulum stress, its interaction with HSPA5/BiP inhibits ATP binding to HSPA5/BiP and subsequent nucleotide exchange. As a result acts as a repressor of the unfolded protein response (UPR) pathway. Up-regulated and secreted by the ER/SR in response to ER stress and hypoxia. Following secretion by the ER/SR, directly binds to 3-O-sulfogalactosylceramide, a lipid sulfatide in the outer cell membrane of target cells. Sulfatide binding promotes its cellular uptake by endocytosis, and is required for its role in alleviating ER stress and cell toxicity under hypoxic and ER stress conditions. Essential for embryonic lung development. Required for the correct postnatal temporal and structural development of splenic white pulp. Required for the repair-associated myeloid response in skeletal muscle, acts as a regulator of phenotypic transition towards prorepair macrophages in response to muscle injury and as a result limits excessive proinflammatory signaling. Represses RELA expression and therefore NF-kB signaling in the myocardium, as a result limits macrophage infiltration of injured tissue and M1 macrophage differentiation in response to myocardial injury. Required for endochondral ossification in long bones and the skull during postnatal development. This Homo sapiens (Human) protein is Mesencephalic astrocyte-derived neurotrophic factor.